The sequence spans 329 residues: Malate dehydrogenase (329 aa).

An NAD(+)-binding site is contributed by 13-19 (GAAGNIS). Positions 94 and 100 each coordinate substrate. Residues Asn-107, Gln-114, and 131–133 (VGN) each bind NAD(+). Substrate contacts are provided by Asn-133 and Arg-164. His-189 serves as the catalytic Proton acceptor.

This sequence belongs to the LDH/MDH superfamily. MDH type 2 family.

It carries out the reaction (S)-malate + NAD(+) = oxaloacetate + NADH + H(+). In terms of biological role, catalyzes the reversible oxidation of malate to oxaloacetate. The chain is Malate dehydrogenase from Psychrobacter cryohalolentis (strain ATCC BAA-1226 / DSM 17306 / VKM B-2378 / K5).